The sequence spans 474 residues: F420-non-reducing hydrogenase vhc subunit A (474 aa).

Cys-61, Cys-64, Cys-445, and Cys-448 together coordinate Ni(2+).

This sequence belongs to the [NiFe]/[NiFeSe] hydrogenase large subunit family. In terms of assembly, the F420-non-reducing hydrogenase vhc is composed of three subunits; VhcA, VhcD and VhcG. Ni(2+) is required as a cofactor.

In Methanococcus voltae, this protein is F420-non-reducing hydrogenase vhc subunit A (vhcA).